The chain runs to 266 residues: 2-Cys peroxiredoxin BAS1, chloroplastic (266 aa).

Residues 1–16 are compositionally biased toward low complexity; that stretch reads MASVASSTTLISSPSS. Residues 1-25 form a disordered region; it reads MASVASSTTLISSPSSRVFPAKSSL. A chloroplast-targeting transit peptide spans 1-65; the sequence is MASVASSTTL…SSTSRRSFAV (65 aa). The 160-residue stretch at 73-232 folds into the Thioredoxin domain; it reads PLVGNKAPDF…TMRTLQALQY (160 aa). The active-site Cysteine sulfenic acid (-SOH) intermediate is the cysteine 119.

It belongs to the peroxiredoxin family. AhpC/Prx1 subfamily. Homodimer; disulfide-linked, upon oxidation. Interacts with the plastidial thioredoxin CDSP32. Interacts with the plastidial NADPH-dependent thioredoxin reductase ANTR-C.

Its subcellular location is the plastid. It is found in the chloroplast. It catalyses the reaction a hydroperoxide + [thioredoxin]-dithiol = an alcohol + [thioredoxin]-disulfide + H2O. In terms of biological role, thiol-specific peroxidase that catalyzes the reduction of hydrogen peroxide and organic hydroperoxides to water and alcohols, respectively. Plays a role in cell protection against oxidative stress by detoxifying peroxides. May be an antioxidant enzyme particularly in the developing shoot and photosynthesizing leaf. In Arabidopsis thaliana (Mouse-ear cress), this protein is 2-Cys peroxiredoxin BAS1, chloroplastic (BAS1).